Here is a 534-residue protein sequence, read N- to C-terminus: Lysophosphatidylcholine acyltransferase 1 (534 aa).

The disordered stretch occupies residues 1-25 (MRLRGRGPRAAPSSSSGAGDARRLA). The Cytoplasmic segment spans residues 1–57 (MRLRGRGPRAAPSSSSGAGDARRLAPPGRNPFVHELRLSALQKAQVAFMTLTLFPIR). The span at 8-19 (PRAAPSSSSGAG) shows a compositional bias: low complexity. A helical; Signal-anchor for type II membrane protein transmembrane segment spans residues 58 to 78 (LLFAAFMMLLAWPFALVASLG). The Lumenal portion of the chain corresponds to 79-534 (PPDKEPEQPL…GRKNSCKKVD (456 aa)). The HXXXXD motif signature appears at 135–140 (HSSYFD). EF-hand domains lie at 379–414 (PVSDALEDMFSLFDESGGGEIDLREYVVALSVVCRP) and 451–486 (ISELTVTDLFQAIDQEERGRITFDDFCGFAEMYPDF). Positions 392, 394, 398, and 403 each coordinate Ca(2+). A Di-lysine motif motif is present at residues 531–534 (KKVD).

It belongs to the 1-acyl-sn-glycerol-3-phosphate acyltransferase family. Enriched in alveolar type II cells of lung. Also highly expressed in stomach.

The protein resides in the endoplasmic reticulum membrane. It localises to the golgi apparatus membrane. It is found in the cell membrane. The protein localises to the lipid droplet. It carries out the reaction a 1-acyl-sn-glycero-3-phosphocholine + an acyl-CoA = a 1,2-diacyl-sn-glycero-3-phosphocholine + CoA. The catalysed reaction is a 1-O-alkyl-sn-glycero-3-phosphocholine + acetyl-CoA = a 1-O-alkyl-2-acetyl-sn-glycero-3-phosphocholine + CoA. It catalyses the reaction a 1-acyl-sn-glycero-3-phosphate + an acyl-CoA = a 1,2-diacyl-sn-glycero-3-phosphate + CoA. The enzyme catalyses a 1-O-(1Z-alkenyl)-sn-glycero-3-phosphocholine + an acyl-CoA = a 1-O-(1Z-alkenyl)-2-acyl-sn-glycero-3-phosphocholine + CoA. It carries out the reaction 1-acyl-sn-glycero-3-phospho-(1'-sn-glycerol) + an acyl-CoA = a 1,2-diacyl-sn-glycero-3-phospho-(1'-sn-glycerol) + CoA. The catalysed reaction is a 1-acyl-sn-glycero-3-phosphocholine + hexadecanoyl-CoA = 1-acyl-2-hexadecanoyl-sn-glycero-3-phosphocholine + CoA. It catalyses the reaction a 1-acyl-sn-glycero-3-phosphate + hexadecanoyl-CoA = 1-acyl-2-hexadecanoyl-sn-glycero-3-phosphate + CoA. The enzyme catalyses 1-acyl-sn-glycero-3-phospho-(1'-sn-glycerol) + hexadecanoyl-CoA = 1-acyl-2-hexadecanoyl-sn-glycero-3-phospho-(1'-sn-glycerol) + CoA. It carries out the reaction 1-hexadecanoyl-sn-glycero-3-phosphocholine + hexadecanoyl-CoA = 1,2-dihexadecanoyl-sn-glycero-3-phosphocholine + CoA. The catalysed reaction is 1-O-hexadecyl-sn-glycero-3-phosphocholine + hexadecanoyl-CoA = 1-O-hexadecyl-2-hexadecanoyl-sn-glycero-3-phosphocholine + CoA. It catalyses the reaction a 1-O-(1Z-alkenyl)-sn-glycero-3-phosphocholine + hexadecanoyl-CoA = 1-O-(1Z)-alkenyl-2-hexadecanoyl-sn-glycero-3-phosphocholine + CoA. The enzyme catalyses 1-hexadecanoyl-sn-glycero-3-phospho-(1'-sn-glycerol) + hexadecanoyl-CoA = 1,2-dihexadecanoyl-sn-glycero-3-phospho-(1'-sn-glycerol) + CoA. It carries out the reaction 1-dodecanoyl-sn-glycero-3-phosphocholine + hexadecanoyl-CoA = 1-dodecanoyl-2-hexadecanoyl-sn-glycero-3-phosphocholine + CoA. The catalysed reaction is 1-tetradecanoyl-sn-glycero-3-phosphocholine + hexadecanoyl-CoA = 1-tetradecanoyl-2-hexadecanoyl-sn-glycero-3-phosphocholine + CoA. It catalyses the reaction 1-O-octadecyl-sn-glycero-3-phosphocholine + hexadecanoyl-CoA = 1-O-octadecyl-2-hexadecanoyl-sn-glycero-3-phosphocholine + CoA. The enzyme catalyses 1-octadecanoyl-sn-glycero-3-phosphocholine + hexadecanoyl-CoA = 1-octadecanoyl-2-hexadecanoyl-sn-glycero-3-phosphocholine + CoA. It carries out the reaction 1-(9Z-octadecenoyl)-sn-glycero-3-phosphocholine + hexadecanoyl-CoA = 1-(9Z-octadecenoyl)-2-hexadecanoyl-sn-glycero-3-phosphocholine + CoA. The catalysed reaction is 1-eicosanoyl-sn-glycero-3-phosphocholine + hexadecanoyl-CoA = 1-eicosanoyl-2-hexadecanoyl-sn-glycero-3-phosphocholine + CoA. It catalyses the reaction hexanoyl-CoA + 1-hexadecanoyl-sn-glycero-3-phosphocholine = 1-hexadecanoyl-2-hexanoyl-sn-glycero-3-phosphocholine + CoA. The enzyme catalyses octanoyl-CoA + 1-hexadecanoyl-sn-glycero-3-phosphocholine = 1-hexadecanoyl-2-octanoyl-sn-glycero-3-phosphocholine + CoA. It carries out the reaction decanoyl-CoA + 1-hexadecanoyl-sn-glycero-3-phosphocholine = 1-hexadecanoyl-2-decanoyl-sn-glycero-3-phosphocholine + CoA. The catalysed reaction is dodecanoyl-CoA + 1-hexadecanoyl-sn-glycero-3-phosphocholine = 1-hexadecanoyl-2-dodecanoyl-sn-glycero-3-phosphocholine + CoA. It catalyses the reaction tetradecanoyl-CoA + 1-hexadecanoyl-sn-glycero-3-phosphocholine = 1-hexadecanoyl-2-tetradecanoyl-sn-glycero-3-phosphocholine + CoA. The enzyme catalyses 1-hexadecanoyl-sn-glycero-3-phosphocholine + (9Z)-octadecenoyl-CoA = 1-hexadecanoyl-2-(9Z-octadecenoyl)-sn-glycero-3-phosphocholine + CoA. It carries out the reaction (9Z,12Z)-octadecadienoyl-CoA + 1-hexadecanoyl-sn-glycero-3-phosphocholine = 1-hexadecanoyl-2-(9Z,12Z-octadecadienoyl)-sn-glycero-3-phosphocholine + CoA. The catalysed reaction is (4Z,7Z,10Z,13Z,16Z,19Z)-docosahexaenoyl-CoA + 1-hexadecanoyl-sn-glycero-3-phosphocholine = 1-hexadecanoyl-2-(4Z,7Z,10Z,13Z,16Z,19Z-docosahexaenoyl)-sn-glycero-3-phosphocholine + CoA. It catalyses the reaction 1-hexadecanoyl-sn-glycero-3-phosphocholine + acetyl-CoA = 1-hexadecanoyl-2-acetyl-sn-glycero-3-phosphocholine + CoA. The enzyme catalyses eicosanoyl-CoA + 1-hexadecanoyl-sn-glycero-3-phosphocholine = 1-hexadecanoyl-2-eicosanoyl-sn-glycero-3-phosphocholine + CoA. It carries out the reaction 1-O-hexadecyl-sn-glycero-3-phosphocholine + acetyl-CoA = 1-O-hexadecyl-2-acetyl-sn-glycero-3-phosphocholine + CoA. The protein operates within lipid metabolism; phospholipid metabolism. With respect to regulation, activity is stimulated by Mg(2+) or Mn(2+). In terms of biological role, exhibits acyltransferase activity. Exhibits acetyltransferase activity. Activity is calcium-independent. Catalyzes the conversion of lysophosphatidylcholine (1-acyl-sn-glycero-3-phosphocholine or LPC) into phosphatidylcholine (1,2-diacyl-sn-glycero-3-phosphocholine or PC). Catalyzes the conversion 1-acyl-sn-glycerol-3-phosphate (lysophosphatidic acid or LPA) into 1,2-diacyl-sn-glycerol-3-phosphate (phosphatidic acid or PA) by incorporating an acyl moiety at the sn-2 position of the glycerol backbone. Displays a clear preference for saturated fatty acyl-CoAs, and 1-myristoyl or 1-palmitoyl LPC as acyl donors and acceptors, respectively. Involved in platelet-activating factor (PAF) biosynthesis by catalyzing the conversion of the PAF precursor, 1-O-alkyl-sn-glycero-3-phosphocholine (lyso-PAF) into 1-O-alkyl-2-acetyl-sn-glycero-3-phosphocholine (PAF). May synthesize phosphatidylcholine in pulmonary surfactant, thereby playing a pivotal role in respiratory physiology. Involved in the regulation of lipid droplet number and size. The polypeptide is Lysophosphatidylcholine acyltransferase 1 (Lpcat1) (Rattus norvegicus (Rat)).